A 332-amino-acid chain; its full sequence is Ribonucleoside-diphosphate reductase small chain C (332 aa).

Residues Asp76, Glu107, and His110 each contribute to the Fe cation site. Tyr114 is an active-site residue. Glu169, Glu203, and His206 together coordinate Fe cation.

Belongs to the ribonucleoside diphosphate reductase small chain family. Homodimer and heterodimer with RNR2A. Heterotetramer of two R1 and two R2 chains. Interacts with CSN7 (via C-terminal tail). Fe cation serves as cofactor. Expressed in roots, cauline and rosette leaves, stems and flowers.

Its subcellular location is the cytoplasm. The protein localises to the nucleus. It carries out the reaction a 2'-deoxyribonucleoside 5'-diphosphate + [thioredoxin]-disulfide + H2O = a ribonucleoside 5'-diphosphate + [thioredoxin]-dithiol. In terms of biological role, provides the precursors necessary for DNA synthesis. Catalyzes the biosynthesis of deoxyribonucleotides from the corresponding ribonucleotides. Involved in DNA damage repair and programmed cell death inhibition. The sequence is that of Ribonucleoside-diphosphate reductase small chain C (TSO2) from Arabidopsis thaliana (Mouse-ear cress).